Reading from the N-terminus, the 693-residue chain is MRGRGSRDTGTQSAAFASRPVRTTVDMQAQRAPLMEVKRNLELSTTLVKSSSRLPLPGSRLKRGPDQMEDGLEPAKKRTRGMGTVTKVDTSRPRGPPLSAVSTAAQKGPRKTGPRGCSAVGPVLRNQKPAPAAPAQKPGTSTAPAVAGKKPGKRPAWDLKGQLCDLHEELKQYREKTQTLDRENQGLREQLREVQEQATTLGTERNTLEEELASVRRRAEQSQQKLETLGARVLELEECLGTKERLVQELQTERLQLQEERSTLSTQLEEREREFQASEAALSSSRAEVLCLRQKTAAQVTLLAEQGDRLYGLEMERRRLHNQLQELKGNIRVFCRVRPVLEGESTPSPGFLVFPPGPAGPSDPPTRLCLSRSDDRRSTLTRAPAAATRHDFSFDRVFPPGSKQEEVFEEISMLVQSALDGYPVCIFAYGQTGSGKTFTMEGGPRGDPQLEGLIPRAMRHLFSVAQEMSGQGWTYSFVASYVEIYNETVRDLLATGTRKGQGGDCEIRRAGPGSEELTVTNARYVPVSCEKEVEALLHLAQQNRAVARTAQNERSSRSHSVFQLQISGEHAARGLQCGAPLNLVDLAGSERLDPGLTLGPGERDRLRETQAINSSLSTLGLVIMALSNKESHVPYRNSKLTYLLQNSLGGSAKMLMFVNISPLEENVSESLNSLRFASKVNQCVIGTAQANKK.

Disordered regions lie at residues 1–24 and 48–156; these read MRGR…VRTT and VKSS…KRPA. Composition is skewed to low complexity over residues 49–59 and 127–138; these read KSSSRLPLPGS and QKPAPAAPAQKP. Residues serine 52 and serine 59 each carry the phosphoserine modification. Residues 165–334 adopt a coiled-coil conformation; it reads DLHEELKQYR…QELKGNIRVF (170 aa). The 354-residue stretch at 330–683 folds into the Kinesin motor domain; sequence NIRVFCRVRP…LRFASKVNQC (354 aa). Position 379 is a phosphothreonine (threonine 379). Position 430 to 437 (430 to 437) interacts with ATP; it reads GQTGSGKT.

It belongs to the TRAFAC class myosin-kinesin ATPase superfamily. Kinesin family. NCD subfamily. Binds NUBP1 and NUBP2. Interacts with PPP1R42.

Its subcellular location is the nucleus. The protein localises to the cytoplasm. It is found in the cytoskeleton. The protein resides in the microtubule organizing center. It localises to the centrosome. Its subcellular location is the spindle. The protein localises to the early endosome. In terms of biological role, minus end-directed microtubule-dependent motor required for bipolar spindle formation. May contribute to movement of early endocytic vesicles. Regulates cilium formation and structure. The protein is Kinesin-like protein KIFC1 of Rattus norvegicus (Rat).